The sequence spans 342 residues: Phosphate acyltransferase (342 aa).

It belongs to the PlsX family. As to quaternary structure, homodimer. Probably interacts with PlsY.

The protein localises to the cytoplasm. It carries out the reaction a fatty acyl-[ACP] + phosphate = an acyl phosphate + holo-[ACP]. The protein operates within lipid metabolism; phospholipid metabolism. Its function is as follows. Catalyzes the reversible formation of acyl-phosphate (acyl-PO(4)) from acyl-[acyl-carrier-protein] (acyl-ACP). This enzyme utilizes acyl-ACP as fatty acyl donor, but not acyl-CoA. The chain is Phosphate acyltransferase from Trichormus variabilis (strain ATCC 29413 / PCC 7937) (Anabaena variabilis).